The primary structure comprises 172 residues: Adenine phosphoribosyltransferase (172 aa).

Belongs to the purine/pyrimidine phosphoribosyltransferase family. As to quaternary structure, homodimer.

It is found in the cytoplasm. The enzyme catalyses AMP + diphosphate = 5-phospho-alpha-D-ribose 1-diphosphate + adenine. The protein operates within purine metabolism; AMP biosynthesis via salvage pathway; AMP from adenine: step 1/1. In terms of biological role, catalyzes a salvage reaction resulting in the formation of AMP, that is energically less costly than de novo synthesis. The protein is Adenine phosphoribosyltransferase of Clostridium perfringens (strain ATCC 13124 / DSM 756 / JCM 1290 / NCIMB 6125 / NCTC 8237 / Type A).